A 55-amino-acid chain; its full sequence is UPF0391 membrane protein NE1120 (55 aa).

2 consecutive transmembrane segments (helical) span residues 4 to 24 (MALV…AGIA) and 27 to 47 (LAWA…VFYL).

This sequence belongs to the UPF0391 family.

The protein resides in the cell membrane. This chain is UPF0391 membrane protein NE1120, found in Nitrosomonas europaea (strain ATCC 19718 / CIP 103999 / KCTC 2705 / NBRC 14298).